A 319-amino-acid polypeptide reads, in one-letter code: tRNA pseudouridine synthase B (319 aa).

Residue D49 is the Nucleophile of the active site.

The protein belongs to the pseudouridine synthase TruB family. Type 1 subfamily.

It catalyses the reaction uridine(55) in tRNA = pseudouridine(55) in tRNA. Responsible for synthesis of pseudouridine from uracil-55 in the psi GC loop of transfer RNAs. In Bartonella henselae (strain ATCC 49882 / DSM 28221 / CCUG 30454 / Houston 1) (Rochalimaea henselae), this protein is tRNA pseudouridine synthase B.